We begin with the raw amino-acid sequence, 1201 residues long: DNA-directed RNA polymerase subunit beta' (1201 aa).

Zn(2+) is bound by residues Cys60, Cys62, Cys75, and Cys78. Residues Asp449, Asp451, and Asp453 each contribute to the Mg(2+) site. Zn(2+)-binding residues include Cys818, Cys892, Cys899, and Cys902.

Belongs to the RNA polymerase beta' chain family. In terms of assembly, the RNAP catalytic core consists of 2 alpha, 1 beta, 1 beta' and 1 omega subunit. When a sigma factor is associated with the core the holoenzyme is formed, which can initiate transcription. Requires Mg(2+) as cofactor. It depends on Zn(2+) as a cofactor.

It catalyses the reaction RNA(n) + a ribonucleoside 5'-triphosphate = RNA(n+1) + diphosphate. DNA-dependent RNA polymerase catalyzes the transcription of DNA into RNA using the four ribonucleoside triphosphates as substrates. The chain is DNA-directed RNA polymerase subunit beta' from Listeria innocua serovar 6a (strain ATCC BAA-680 / CLIP 11262).